The chain runs to 836 residues: Protein IWS1 homolog A (836 aa).

Residues 1 to 542 form a disordered region; the sequence is MEADNYSPEH…DMKSGKMGDY (542 aa). Basic and acidic residues-rich tracts occupy residues 20-36, 43-122, 133-148, 157-186, 206-218, 288-309, 370-386, and 458-469; these read QDER…EQRS, HQSE…DRSP, EPVR…DVPR, DERH…DKAP, DSKD…HAAS, VPVK…KASD, RSSE…KKLQ, and ERKSKTETKSAD. Acidic residues predominate over residues 476–485; the sequence is SDSENEEENL. Over residues 533–542 the composition is skewed to basic and acidic residues; sequence DMKSGKMGDY. One can recognise a TFIIS N-terminal domain in the interval 631-709; that stretch reads SAIKEWLTPL…NEWSRPIFGL (79 aa). Positions 714–746 are disordered; that stretch reads KGMTREEREQRDIEQMPQRRRMSSSGGQTPRRD. The span at 716–727 shows a compositional bias: basic and acidic residues; it reads MTREEREQRDIE.

It belongs to the IWS1 family.

Its subcellular location is the nucleus. Its function is as follows. Transcription factor which plays a key role in defining the composition of the RNA polymerase II (RNAPII) elongation complex and in modulating the production of mature mRNA transcripts. This is Protein IWS1 homolog A (iws1-a) from Xenopus laevis (African clawed frog).